A 422-amino-acid chain; its full sequence is Anhydromevalonate phosphate decarboxylase (422 aa).

The Mn(2+) site is built by asparagine 134 and glutamate 197. Aspartate 244 functions as the Proton acceptor in the catalytic mechanism.

This sequence belongs to the UbiD family. Prenylated FMN is required as a cofactor. Mn(2+) serves as cofactor.

The catalysed reaction is (2E)-3-methyl-5-phosphooxypent-2-enoate + H(+) = isopentenyl phosphate + CO2. The protein operates within isoprenoid biosynthesis; isopentenyl diphosphate biosynthesis via mevalonate pathway. Catalyzes the conversion of trans-anhydromevalonate 5-phosphate (tAHMP) into isopentenyl phosphate. Involved in the archaeal mevalonate (MVA) pathway, which provides fundamental precursors for isoprenoid biosynthesis, such as isopentenyl diphosphate (IPP) and dimethylallyl diphosphate (DMAPP). This is Anhydromevalonate phosphate decarboxylase from Methanosarcina mazei (strain ATCC BAA-159 / DSM 3647 / Goe1 / Go1 / JCM 11833 / OCM 88) (Methanosarcina frisia).